The chain runs to 176 residues: Large ribosomal subunit protein uL22 (176 aa).

Residues 113–176 (VVESRPSKDQ…EISEAKGGSD (64 aa)) are disordered. Low complexity predominate over residues 136-152 (SKAAATAPAKKSSASKA). The span at 159 to 176 (TKAESKTSEISEAKGGSD) shows a compositional bias: basic and acidic residues.

This sequence belongs to the universal ribosomal protein uL22 family. Part of the 50S ribosomal subunit.

This protein binds specifically to 23S rRNA; its binding is stimulated by other ribosomal proteins, e.g. L4, L17, and L20. It is important during the early stages of 50S assembly. It makes multiple contacts with different domains of the 23S rRNA in the assembled 50S subunit and ribosome. In terms of biological role, the globular domain of the protein is located near the polypeptide exit tunnel on the outside of the subunit, while an extended beta-hairpin is found that lines the wall of the exit tunnel in the center of the 70S ribosome. The sequence is that of Large ribosomal subunit protein uL22 from Mycobacterium ulcerans (strain Agy99).